A 400-amino-acid polypeptide reads, in one-letter code: tRNA-specific 2-thiouridylase MnmA (400 aa).

Residues 19 to 26 (AMSGGVDS) and Leu-45 each bind ATP. The active-site Nucleophile is Cys-113. Cys-113 and Cys-210 are oxidised to a cystine. Gly-137 provides a ligand contact to ATP. The interval 160 to 162 (RDQ) is interaction with tRNA. Residue Cys-210 is the Cysteine persulfide intermediate of the active site.

Belongs to the MnmA/TRMU family.

It localises to the cytoplasm. The enzyme catalyses S-sulfanyl-L-cysteinyl-[protein] + uridine(34) in tRNA + AH2 + ATP = 2-thiouridine(34) in tRNA + L-cysteinyl-[protein] + A + AMP + diphosphate + H(+). Functionally, catalyzes the 2-thiolation of uridine at the wobble position (U34) of tRNA, leading to the formation of s(2)U34. In Rhodopseudomonas palustris (strain BisB18), this protein is tRNA-specific 2-thiouridylase MnmA.